The primary structure comprises 741 residues: Transcription activator of gluconeogenesis BDBG_05438 (741 aa).

The interval 1–70 is disordered; sequence MTASTRNGSP…NAKDPLRPRR (70 aa). Over residues 25 to 61 the composition is skewed to polar residues; that stretch reads KSMTTTPANPPETKSQTNGKGSGTAQSSQKPASTSAN. A DNA-binding region (zn(2)-C6 fungal-type) is located at residues 77-105; sequence CFACQRAHLTCGDERPCQRCIKRGLQDAC. 6 disordered regions span residues 135–163, 202–239, 285–321, 401–421, 559–590, and 655–741; these read QANTTRNIPNQRGNASNSNSNKVSRQSVS, SVFHAQSPSSTQNFDLSSNPQTQNLSSAMSQTASSVSG, GAGDTPPSDSATQRGSIGRSSGTFTAQNFGDSANNQS, TNLMHPTNTPQQSRISTPGLK, GSSLSSASSVRGSSTFTPRNNNTHNSIDPHTG, and FHGK…AKRG. Positions 202–226 are enriched in polar residues; the sequence is SVFHAQSPSSTQNFDLSSNPQTQNL. A compositionally biased stretch (low complexity) spans 227–238; that stretch reads SSAMSQTASSVS. Composition is skewed to polar residues over residues 291–321 and 401–416; these read PSDSATQRGSIGRSSGTFTAQNFGDSANNQS and TNLMHPTNTPQQSRIS. Residues 560–572 are compositionally biased toward low complexity; that stretch reads SSLSSASSVRGSS. Positions 573-586 are enriched in polar residues; that stretch reads TFTPRNNNTHNSID. The span at 672–718 shows a compositional bias: low complexity; that stretch reads TGTTTSGDVATTTATGTSTSNGANANTNGNNTNPNDPSTAASSSASS. Residues 723–732 show a composition bias toward basic residues; sequence RSNHLGKRGG.

This sequence belongs to the ERT1/acuK family.

Its subcellular location is the nucleus. Its function is as follows. Transcription factor which regulates nonfermentable carbon utilization. Activator of gluconeogenetic genes. This Blastomyces gilchristii (strain SLH14081) (Blastomyces dermatitidis) protein is Transcription activator of gluconeogenesis BDBG_05438.